The sequence spans 216 residues: Uracil phosphoribosyltransferase (216 aa).

30–34 contacts GTP; it reads KTLVR. 5-phospho-alpha-D-ribose 1-diphosphate-binding positions include arginine 80, arginine 105, and 140 to 148; that span reads DPMIATAST. Residues isoleucine 203 and 208–210 contribute to the uracil site; that span reads GDA. Aspartate 209 lines the 5-phospho-alpha-D-ribose 1-diphosphate pocket.

It belongs to the UPRTase family. It depends on Mg(2+) as a cofactor.

It catalyses the reaction UMP + diphosphate = 5-phospho-alpha-D-ribose 1-diphosphate + uracil. Its pathway is pyrimidine metabolism; UMP biosynthesis via salvage pathway; UMP from uracil: step 1/1. With respect to regulation, allosterically activated by GTP. Catalyzes the conversion of uracil and 5-phospho-alpha-D-ribose 1-diphosphate (PRPP) to UMP and diphosphate. This is Uracil phosphoribosyltransferase from Sulfurisphaera tokodaii (strain DSM 16993 / JCM 10545 / NBRC 100140 / 7) (Sulfolobus tokodaii).